Reading from the N-terminus, the 760-residue chain is Molybdenum cofactor sulfurase 2 (760 aa).

Lys-223 is modified (N6-(pyridoxal phosphate)lysine). Cys-389 is an active-site residue. Residues 608 to 758 form the MOSC domain; that stretch reads QSDDEARTLR…LHCGSPLQVV (151 aa).

The protein belongs to the class-V pyridoxal-phosphate-dependent aminotransferase family. MOCOS subfamily. Pyridoxal 5'-phosphate is required as a cofactor.

It carries out the reaction Mo-molybdopterin + L-cysteine + AH2 = thio-Mo-molybdopterin + L-alanine + A + H2O. Its function is as follows. Sulfurates the molybdenum cofactor. Sulfation of molybdenum is essential for xanthine dehydrogenase (XDH) and aldehyde oxidase (ADO) enzymes in which molybdenum cofactor is liganded by 1 oxygen and 1 sulfur atom in active form. This Culex quinquefasciatus (Southern house mosquito) protein is Molybdenum cofactor sulfurase 2.